Here is a 1374-residue protein sequence, read N- to C-terminus: Probable ATP-dependent RNA helicase spindle-E (1374 aa).

In terms of domain architecture, Helicase ATP-binding spans 46–212; the sequence is LARIRENPVI…FKTPKKVGYL (167 aa). Position 59-66 (59-66) interacts with ATP; it reads GPTGCGKT. A DEAH box motif is present at residues 158–161; that stretch reads DEIH. The region spanning 265 to 447 is the Helicase C-terminal domain; it reads VCDRLIENMH…NVILKAKLLE (183 aa). The Tudor domain occupies 866 to 931; the sequence is QFAVGQMVAA…RKLDGPLAYM (66 aa).

It belongs to the DEAD box helicase family. DEAH subfamily.

The protein resides in the cytoplasm. It catalyses the reaction ATP + H2O = ADP + phosphate + H(+). In terms of biological role, probable ATP-binding RNA helicase which plays a central role during gametogenesis by repressing transposable elements and preventing their mobilization, which is essential for the germline integrity. Acts via the piRNA metabolic process, which mediates the repression of transposable elements during meiosis by forming complexes composed of piRNAs and Piwi proteins and govern the methylation and subsequent repression of transposons. This chain is Probable ATP-dependent RNA helicase spindle-E (spn-E), found in Aedes aegypti (Yellowfever mosquito).